Here is a 151-residue protein sequence, read N- to C-terminus: Transcriptional repressor NrdR (151 aa).

A zinc finger spans residues 3-34 (CPYCGYGESKVVDSRATDDKMAIRRRRECLKC). The ATP-cone domain occupies 49 to 139 (LLVIKKNMSR…VYRQFKDINT (91 aa)).

The protein belongs to the NrdR family. Zn(2+) serves as cofactor.

Negatively regulates transcription of bacterial ribonucleotide reductase nrd genes and operons by binding to NrdR-boxes. The protein is Transcriptional repressor NrdR of Clostridium kluyveri (strain NBRC 12016).